The chain runs to 327 residues: Phenylalanine--tRNA ligase alpha subunit (327 aa).

Glu252 contacts Mg(2+).

This sequence belongs to the class-II aminoacyl-tRNA synthetase family. Phe-tRNA synthetase alpha subunit type 1 subfamily. Tetramer of two alpha and two beta subunits. Requires Mg(2+) as cofactor.

It is found in the cytoplasm. It carries out the reaction tRNA(Phe) + L-phenylalanine + ATP = L-phenylalanyl-tRNA(Phe) + AMP + diphosphate + H(+). This chain is Phenylalanine--tRNA ligase alpha subunit, found in Salmonella newport (strain SL254).